We begin with the raw amino-acid sequence, 553 residues long: Probable bifunctional riboflavin biosynthesis protein RIBA 2, chloroplastic (553 aa).

Residues 1-56 constitute a chloroplast transit peptide; the sequence is MASISPTSSSVAALRGHPVQFVKGGAVSKEAKGSISFSPVANSNNANVKFTGLRVA. Residues 62–336 are DHBP synthase; that stretch reads DGAFPGDGYS…IADLIRYRRK (275 aa). The disordered stretch occupies residues 70-90; sequence YSGNDNTVLPKSTSVRGQDYP. Polar residues predominate over residues 72-85; sequence GNDNTVLPKSTSVR. Residues 160-161, Asp-165, 275-279, and Glu-299 contribute to the D-ribulose 5-phosphate site; these read RE and RAGHT. Residue Glu-161 coordinates Mg(2+). His-278 contributes to the Mg(2+) binding site. A GTP cyclohydrolase II region spans residues 337-553; it reads RDRLVERSSV…TGSNGAKGEH (217 aa). 387–391 serves as a coordination point for GTP; it reads RVHSE. Zn(2+) is bound by residues Cys-392, Cys-403, and Cys-405. GTP-binding positions include Gln-408, 431-433, and Thr-453; that span reads EGR. Asp-465 functions as the Proton acceptor; for GTP cyclohydrolase activity in the catalytic mechanism. Arg-467 functions as the Nucleophile; for GTP cyclohydrolase activity in the catalytic mechanism. Residues Thr-488 and Lys-493 each contribute to the GTP site.

It in the N-terminal section; belongs to the DHBP synthase family. In the C-terminal section; belongs to the GTP cyclohydrolase II family. Mg(2+) serves as cofactor. Requires Mn(2+) as cofactor. The cofactor is Zn(2+).

It localises to the plastid. Its subcellular location is the chloroplast. It catalyses the reaction D-ribulose 5-phosphate = (2S)-2-hydroxy-3-oxobutyl phosphate + formate + H(+). The enzyme catalyses GTP + 4 H2O = 2,5-diamino-6-hydroxy-4-(5-phosphoribosylamino)-pyrimidine + formate + 2 phosphate + 3 H(+). The protein operates within cofactor biosynthesis; riboflavin biosynthesis; 2-hydroxy-3-oxobutyl phosphate from D-ribulose 5-phosphate: step 1/1. It participates in cofactor biosynthesis; riboflavin biosynthesis; 5-amino-6-(D-ribitylamino)uracil from GTP: step 1/4. Its function is as follows. Involved in riboflavin biosynthesis. Catalyzes both the conversion of D-ribulose 5-phosphate to formate and 3,4-dihydroxy-2-butanone 4-phosphate and the conversion of GTP to 2,5-diamino-6-ribosylamino-4(3H)-pyrimidinone 5'-phosphate (DARP), formate and pyrophosphate. This is Probable bifunctional riboflavin biosynthesis protein RIBA 2, chloroplastic (RIBA2) from Oryza sativa subsp. japonica (Rice).